Reading from the N-terminus, the 149-residue chain is Large ribosomal subunit protein uL13 (149 aa).

The protein belongs to the universal ribosomal protein uL13 family. Part of the 50S ribosomal subunit.

Functionally, this protein is one of the early assembly proteins of the 50S ribosomal subunit, although it is not seen to bind rRNA by itself. It is important during the early stages of 50S assembly. This is Large ribosomal subunit protein uL13 from Pelodictyon phaeoclathratiforme (strain DSM 5477 / BU-1).